Consider the following 183-residue polypeptide: MSDVEIKVENIVASATLGKSLELPKIAPALENVEYNLEQFPGLVFKLKDPKTAALIFGSGKLVCTGAKCIEDSIKAIHMTVDKIRELDTEIPEEFEIKIQNIVASANLGKVLNLEAVALDLENTEYEPEQFPGLVYRLSDPKVVLLLFGSGKVVCTGAKTADQALLGVQKTKERLIELYLIEE.

A run of 2 repeats spans residues 8-84 (VENI…VDKI) and 99-175 (IQNI…KERL).

The protein belongs to the TBP family.

Its function is as follows. General factor that plays a role in the activation of archaeal genes transcribed by RNA polymerase. Binds specifically to the TATA box promoter element which lies close to the position of transcription initiation. In Methanosphaera stadtmanae (strain ATCC 43021 / DSM 3091 / JCM 11832 / MCB-3), this protein is TATA-box-binding protein.